Consider the following 86-residue polypeptide: Putative antitoxin VapB5 (86 aa).

It belongs to the phD/YefM antitoxin family. In terms of assembly, forms a complex with VapC5.

Probable antitoxin component of a probable type II toxin-antitoxin (TA) system. The cognate toxin is VapC5. This Mycobacterium tuberculosis (strain CDC 1551 / Oshkosh) protein is Putative antitoxin VapB5 (vapB5).